An 839-amino-acid polypeptide reads, in one-letter code: LPS-assembly protein LptD (839 aa).

A signal peptide spans 1-21 (MAIGITACVLSLINYQGLAYS).

This sequence belongs to the LptD family. As to quaternary structure, component of the lipopolysaccharide transport and assembly complex. Interacts with LptE and LptA.

The protein localises to the cell outer membrane. Together with LptE, is involved in the assembly of lipopolysaccharide (LPS) at the surface of the outer membrane. The chain is LPS-assembly protein LptD from Legionella pneumophila (strain Lens).